The sequence spans 321 residues: Trem-like transcript 2 protein (321 aa).

Residues methionine 1–serine 18 form the signal peptide. At glycine 19 to serine 268 the chain is on the extracellular side. The region spanning proline 20 to leucine 121 is the Ig-like V-type domain. Cystine bridges form between cysteine 41–cysteine 105 and cysteine 56–cysteine 63. Residue asparagine 89 is glycosylated (N-linked (GlcNAc...) asparagine). Composition is skewed to polar residues over residues glycine 189–aspartate 220 and serine 227–threonine 241. The interval glycine 189 to threonine 241 is disordered. A helical membrane pass occupies residues threonine 269 to tryptophan 289. The Cytoplasmic segment spans residues lysine 290–isoleucine 321.

As to quaternary structure, interacts with CD276 and this interaction enhances T-cell activation. In terms of tissue distribution, detected in cultured B-cells, T-cell leukemia and monocyte leukemia. Expressed constitutively on CD8 T-cells and induced on CD4 T-cells after activation.

The protein localises to the cell membrane. In terms of biological role, cell surface receptor that may play a role in the innate and adaptive immune response. Acts as a counter-receptor for CD276 and interaction with CD276 on T-cells enhances T-cell activation. The polypeptide is Trem-like transcript 2 protein (TREML2) (Homo sapiens (Human)).